The primary structure comprises 160 residues: MSGAVCPGSFDPVTLGHIDVFERAAAQFDEIVVAVMVNPNKSGMFTLDERIALIEESTTHLPNLRVESGQGLIVDFVRERGLTAIVKGLRTGTDFEYELQMAQMNKHVAGIDTFFVATAPSYSFVSSSLAKEVAMLGGDVTALLPAAVNTRLTAKLAERG.

Serine 9 is a binding site for substrate. Residues 9-10 (SF) and histidine 17 each bind ATP. 3 residues coordinate substrate: lysine 41, isoleucine 73, and lysine 87. Residues 88–90 (GLR), glutamate 98, and 122–128 (YSFVSSS) each bind ATP.

The protein belongs to the bacterial CoaD family. As to quaternary structure, homohexamer. Requires Mg(2+) as cofactor.

It localises to the cytoplasm. The catalysed reaction is (R)-4'-phosphopantetheine + ATP + H(+) = 3'-dephospho-CoA + diphosphate. The protein operates within cofactor biosynthesis; coenzyme A biosynthesis; CoA from (R)-pantothenate: step 4/5. Its function is as follows. Reversibly transfers an adenylyl group from ATP to 4'-phosphopantetheine, yielding dephospho-CoA (dPCoA) and pyrophosphate. The polypeptide is Phosphopantetheine adenylyltransferase (Mycolicibacterium gilvum (strain PYR-GCK) (Mycobacterium gilvum (strain PYR-GCK))).